Consider the following 598-residue polypeptide: Serine/threonine-protein kinase PLK1 (598 aa).

Positions methionine 1–glycine 23 are disordered. Threonine 10 is modified (phosphothreonine; by PKA; in vitro). Residues serine 25 and serine 26 each carry the phosphoserine modification. Residues tyrosine 44–phenylalanine 296 enclose the Protein kinase domain. ATP contacts are provided by residues leucine 50–cysteine 58, lysine 73, and glutamate 122. Aspartate 167 (proton acceptor) is an active-site residue. Residues lysine 169 to asparagine 172 and aspartate 185 contribute to the ATP site. An activation loop region spans residues aspartate 185 to glutamate 212. Position 201 is a phosphothreonine; by PKA (threonine 201). Residues serine 260 and serine 326 each carry the phosphoserine; by autocatalysis modification. The D-box that targets the protein for proteasomal degradation in anaphase motif lies at arginine 328–leucine 331. Position 340 is a phosphoserine; by CDK1 (serine 340). Residues tryptophan 404–glutamate 482 form the POLO box 1 domain. The linker stretch occupies residues alanine 487–arginine 501. In terms of domain architecture, POLO box 2 spans phenylalanine 504–serine 586. The interval histidine 532–lysine 534 is important for interaction with phosphorylated proteins.

This sequence belongs to the protein kinase superfamily. Ser/Thr protein kinase family. In terms of assembly, interacts with plk1 and kif2a. Interacts with fbxo5. Post-translationally, activated by phosphorylation on Thr-201 during M phase. Phosphorylated by stk10, leading to activation during oocyte maturation. Ubiquitinated by the anaphase promoting complex/cyclosome (APC/C) in anaphase and following DNA damage, leading to its degradation by the proteasome. Protein levels are down-regulated by proteasomal degradation in anaphase.

The protein localises to the nucleus. It is found in the cytoplasm. Its subcellular location is the cytoskeleton. It localises to the microtubule organizing center. The protein resides in the centrosome. The protein localises to the spindle. It is found in the midbody. It carries out the reaction L-seryl-[protein] + ATP = O-phospho-L-seryl-[protein] + ADP + H(+). The enzyme catalyses L-threonyl-[protein] + ATP = O-phospho-L-threonyl-[protein] + ADP + H(+). Its activity is regulated as follows. Activated by phosphorylation of Thr-201. Functionally, serine/threonine-protein kinase that performs several important functions throughout M phase of the cell cycle, including the regulation of centrosome maturation and spindle assembly, the removal of cohesins from chromosome arms, the inactivation of anaphase-promoting complex/cyclosome (APC/C) inhibitors, and the regulation of mitotic exit and cytokinesis. Polo-like kinase proteins act by binding and phosphorylating proteins that are already phosphorylated on a specific motif recognized by the POLO box domains. Phosphorylates cdc25, pkmyt1/myt1, stag2/sa2, tpx2. Plays multiple essential roles during mitosis. Phosphorylates the N-terminal domain of cdc25, which leads to cyclin b-cdc2 activation and mitotic entry. Also required for organization of bipolar spindles, and for exit from mitosis. Involved in kinetochore functions and sister chromatid cohesion by phosphorylating stag2/sa2. This chain is Serine/threonine-protein kinase PLK1 (plk1), found in Xenopus laevis (African clawed frog).